The chain runs to 49 residues: Protein YdfW (49 aa).

Residues 16-49 (PKADHPWLTRRTQSHQQVKPPKLPKKKPDPDKKD) form a disordered region.

Functionally, may be involved in H(2) production during fermentative growth. In Escherichia coli (strain K12), this protein is Protein YdfW (ydfW).